The sequence spans 557 residues: 2-succinyl-5-enolpyruvyl-6-hydroxy-3-cyclohexene-1-carboxylate synthase (557 aa).

This sequence belongs to the TPP enzyme family. MenD subfamily. Homodimer. The cofactor is Mg(2+). Mn(2+) serves as cofactor. It depends on thiamine diphosphate as a cofactor.

The catalysed reaction is isochorismate + 2-oxoglutarate + H(+) = 5-enolpyruvoyl-6-hydroxy-2-succinyl-cyclohex-3-ene-1-carboxylate + CO2. It functions in the pathway quinol/quinone metabolism; 1,4-dihydroxy-2-naphthoate biosynthesis; 1,4-dihydroxy-2-naphthoate from chorismate: step 2/7. It participates in quinol/quinone metabolism; menaquinone biosynthesis. In terms of biological role, catalyzes the thiamine diphosphate-dependent decarboxylation of 2-oxoglutarate and the subsequent addition of the resulting succinic semialdehyde-thiamine pyrophosphate anion to isochorismate to yield 2-succinyl-5-enolpyruvyl-6-hydroxy-3-cyclohexene-1-carboxylate (SEPHCHC). This Staphylococcus aureus (strain Mu3 / ATCC 700698) protein is 2-succinyl-5-enolpyruvyl-6-hydroxy-3-cyclohexene-1-carboxylate synthase.